The chain runs to 423 residues: Transducer protein Htr13 (423 aa).

The segment covering 1–19 (MTGPDNSLTDPSASPSTPV) has biased composition (polar residues). The tract at residues 1–21 (MTGPDNSLTDPSASPSTPVAS) is disordered. Residues 152 to 388 (AVAELIERAR…ELTMMIDEAA (237 aa)) enclose the Methyl-accepting transducer domain.

It belongs to the methyl-accepting chemotaxis (MCP) protein family. In terms of processing, methylated by CheR.

Its subcellular location is the cytoplasm. In terms of biological role, potentially involved in chemo- or phototactic signal transduction. In Halobacterium salinarum (strain ATCC 29341 / DSM 671 / R1), this protein is Transducer protein Htr13 (htr13).